A 438-amino-acid polypeptide reads, in one-letter code: Aminopeptidase E (438 aa).

Active-site residues include Cys-70, His-362, and Asn-383.

The protein belongs to the peptidase C1 family.

It localises to the cytoplasm. Functionally, can hydrolyze internal peptide bonds in Met-enkephalin and bradykinin; however, hydrolysis of alpha-, beta-, and kappa-caseins is not detected. In Lactobacillus helveticus (Lactobacillus suntoryeus), this protein is Aminopeptidase E (pepE).